A 474-amino-acid chain; its full sequence is tRNA-2-methylthio-N(6)-dimethylallyladenosine synthase (474 aa).

Residues 3–120 (KKLHIKTWGC…LPEMINHVQG (118 aa)) form the MTTase N-terminal domain. Positions 12, 49, 83, 157, 161, and 164 each coordinate [4Fe-4S] cluster. The Radical SAM core domain maps to 143 to 375 (RAEGPTAFVS…QQRISQQAME (233 aa)). Residues 378-441 (RKMVGTVQRV…ASSLRGILLR (64 aa)) form the TRAM domain.

The protein belongs to the methylthiotransferase family. MiaB subfamily. As to quaternary structure, monomer. [4Fe-4S] cluster is required as a cofactor.

Its subcellular location is the cytoplasm. It carries out the reaction N(6)-dimethylallyladenosine(37) in tRNA + (sulfur carrier)-SH + AH2 + 2 S-adenosyl-L-methionine = 2-methylsulfanyl-N(6)-dimethylallyladenosine(37) in tRNA + (sulfur carrier)-H + 5'-deoxyadenosine + L-methionine + A + S-adenosyl-L-homocysteine + 2 H(+). In terms of biological role, catalyzes the methylthiolation of N6-(dimethylallyl)adenosine (i(6)A), leading to the formation of 2-methylthio-N6-(dimethylallyl)adenosine (ms(2)i(6)A) at position 37 in tRNAs that read codons beginning with uridine. In Yersinia pestis bv. Antiqua (strain Antiqua), this protein is tRNA-2-methylthio-N(6)-dimethylallyladenosine synthase.